The primary structure comprises 517 residues: tRNA-2-methylthio-N(6)-dimethylallyladenosine synthase (517 aa).

An MTTase N-terminal domain is found at 29 to 146; the sequence is RTYQVRTYGC…LPTLLERARH (118 aa). The [4Fe-4S] cluster site is built by C38, C75, C109, C183, C187, and C190. Residues 169-405 enclose the Radical SAM core domain; it reads RESAYAAWVS…VELQESISLQ (237 aa). A TRAM domain is found at 408–475; that stretch reads QALVGQTVEL…PHHLIADAGV (68 aa).

Belongs to the methylthiotransferase family. MiaB subfamily. In terms of assembly, monomer. Requires [4Fe-4S] cluster as cofactor.

The protein localises to the cytoplasm. It carries out the reaction N(6)-dimethylallyladenosine(37) in tRNA + (sulfur carrier)-SH + AH2 + 2 S-adenosyl-L-methionine = 2-methylsulfanyl-N(6)-dimethylallyladenosine(37) in tRNA + (sulfur carrier)-H + 5'-deoxyadenosine + L-methionine + A + S-adenosyl-L-homocysteine + 2 H(+). Functionally, catalyzes the methylthiolation of N6-(dimethylallyl)adenosine (i(6)A), leading to the formation of 2-methylthio-N6-(dimethylallyl)adenosine (ms(2)i(6)A) at position 37 in tRNAs that read codons beginning with uridine. The sequence is that of tRNA-2-methylthio-N(6)-dimethylallyladenosine synthase from Mycolicibacterium paratuberculosis (strain ATCC BAA-968 / K-10) (Mycobacterium paratuberculosis).